A 643-amino-acid chain; its full sequence is Chromosomal replication initiator protein DnaA (643 aa).

Residues 1-97 (MADVPADLAA…VDDSAGEPPP (97 aa)) form a domain I, interacts with DnaA modulators region. Residues 87 to 303 (TVDDSAGEPP…ASGPGEPTAR (217 aa)) are disordered. The tract at residues 97–302 (PAAPPAQQTP…PASGPGEPTA (206 aa)) is domain II. Over residues 195–209 (SPSSQDAYGSPSQDY) the composition is skewed to polar residues. A compositionally biased stretch (basic and acidic residues) spans 222 to 269 (QRGDYDTPRAEYEPARPDYDSARPDYESARPEYDQRDPVRRELPEPPA). Residues 291–300 (PAPASGPGEP) show a composition bias toward low complexity. The segment at 303-519 (RLNPKYLFDT…GALIRVTAFA (217 aa)) is domain III, AAA+ region. The ATP site is built by glycine 347, glycine 349, lysine 350, and threonine 351. Residues 520 to 643 (SLNRQPVDLG…TELTNRIKNG (124 aa)) form a domain IV, binds dsDNA region.

Belongs to the DnaA family. As to quaternary structure, oligomerizes as a right-handed, spiral filament on DNA at oriC.

The protein resides in the cytoplasm. Its function is as follows. Plays an essential role in the initiation and regulation of chromosomal replication. ATP-DnaA binds to the origin of replication (oriC) to initiate formation of the DNA replication initiation complex once per cell cycle. Binds the DnaA box (a 9 base pair repeat at the origin) and separates the double-stranded (ds)DNA. Forms a right-handed helical filament on oriC DNA; dsDNA binds to the exterior of the filament while single-stranded (ss)DNA is stabiized in the filament's interior. The ATP-DnaA-oriC complex binds and stabilizes one strand of the AT-rich DNA unwinding element (DUE), permitting loading of DNA polymerase. After initiation quickly degrades to an ADP-DnaA complex that is not apt for DNA replication. Binds acidic phospholipids. In Streptomyces reticuli, this protein is Chromosomal replication initiator protein DnaA.